The primary structure comprises 600 residues: MRISQICTVLSTVTSAVAVGVNPLPAPREISWGSSGPKSIAGELQLRTDSDSADGIVADAWNRAWETIVALRWVPAATEAPISSFEPFPTPTAGASKKSKRASNSLQYVNVQVKDIEADLQHGVDESYTLDVEEDSDTITINAETVWGALHAFTTLQQLVISDGHGGLIIEEPVNIKDSPLYPYRGIMLDTGRNFVSLPKIFEQLEGMSLSKLNVLHWHIDDAQSWPIWVDVYPEMVKDAYSPHEIYSRNDVRNIVNYARARGIRVIPEIDMPSHSSSGWKQVDPEMVTCTDSWWSNDDWPLHTAVEPNPGQLDIIYNKTYEVVGNVYKELSDIFPDHWFHVGGDEIQPNCFNFSTHVTKWFAEDPSRTYHDLAQYWVDHAVPIFQNYSQERRLVMWEDIALSADNAHDVPKNIVMQSWNNGLEYISNLTARGYDVIVSSSDFLYLDCGHGGFVTNDPRYNVMANPDANTPNFNYGGNGGSWCAPYKTWQRIYDYDFTLNLTETQAKHIIGATAPLWGEQVDDINVSSMFWPRAAALAELVWSGNRDANGNKRTTEMTQRILNFREYLVANGVQAQALVPKYCLQHPHACDLYRNQAAIQ.

Residues 1-18 (MRISQICTVLSTVTSAVA) form the signal peptide. The propeptide occupies 19–96 (VGVNPLPAPR…PFPTPTAGAS (78 aa)). A glycan (O-linked (Man...) threonine) is linked at Thr78. O-linked (Man...) serine glycosylation is found at Ser83 and Ser84. Catalysis depends on charge relay system residues Asp222 and His275. A disulfide bond links Cys290 and Cys351. N-linked (HexNAc...) asparagine glycosylation occurs at Asn318. Residue Glu346 is the Charge relay system of the active site. Asn353 is a glycosylation site (N-linked (GlcNAc...) asparagine). The N-linked (HexNAc...) asparagine glycan is linked to Asn387. N-linked (GlcNAc...) asparagine glycosylation occurs at Asn428. Cys448 and Cys483 form a disulfide bridge. Asn500 and Asn525 each carry an N-linked (GlcNAc...) asparagine glycan. The cysteines at positions 583 and 590 are disulfide-linked.

The protein belongs to the glycosyl hydrolase 20 family. In terms of assembly, homodimer. Oligosaccharide moieties may also take part in the dimerization. Dimerization is a pH-dependent reversible process. The individual catalytic cores dimerize and the catalytic core of one subunit in the active dimer interacts with the propeptide of the second subunit. Post-translationally, the precursor of the propeptide is intracellularly processed in the endoplasmic reticulum by a dibasic peptidase, different from Kex2, removing Lys-97--Arg-101 from the precursor producing the activated propeptide. The propeptide binds non-covalently to the catalytic domain. Propeptide binding is necessary for full activation of the enzyme, dimerization of the catalytic domain and secretion of the active enzyme. In terms of processing, O-glycosylated. O-glycosylation (O-mannosylation) at the C-terminus of the propeptide is necessary for full enzyme activity. N-glycosylated. N-glycosylation of the catalytic domain increases the stability and solubility of the enzyme, especially at low pH. Contains high mannose-type (M4-M11) N-glycans at the C-terminus. N-glycan deglycosylation does not affect enzyme activity.

Its subcellular location is the secreted. The catalysed reaction is Hydrolysis of terminal non-reducing N-acetyl-D-hexosamine residues in N-acetyl-beta-D-hexosaminides.. Activated by non-covalent binding of the propeptide to the catalytic domain. The concentration of the propeptide is regulated in the endoplasmic reticulum and the propeptide thus regulates the amount of the active enzyme at various stages of the growth cycle. The dimeric enzyme has about half of the maximal activity in the presence of one bound propeptide, but is fully active with two bound O-glycosylated propeptides. Inhibited by N-acetylglucosamine (NAG)-thiazoline. Its function is as follows. Selectively hydrolyzes GlcNAcbeta(1-&gt;4)GlcNAc (N,N'-diacetylchitobiose) and Gal-NAcbeta(1-&gt;4)GlcNAc, but not their C-2 epimers GlcNAcbeta(1-&gt;4)ManNAc or Gal-NAcbeta(1-&gt;4)ManNAc. However, hydrolyzes both GlcNAcbeta(1-&gt;6)GlcNAc and GlcNAcbeta(1-&gt;6)ManNAc. Part of the binary chitinolytic system. Involved in hydrolysis of chitobiose and higher chito-oligomers (produced from cell wall chitin by endochitinases), thus contributing to the formation of germ tubes, fruit-bodies and septa during hyphenation. Hydrolyzes synthetic substrate p-nitrophenyl-beta-N-acetyl-D-glucosaminide (pNP-GlcNAc). Hydrolyzes synthetic substrate p-nitrophenyl-beta-N-acetyl-D-galactosaminide (pNP-GalNAc). Hydrolyzes chromogenic substrate 4-nitrophenyl-2-acetamido-2-deoxyglucopyranoside. The polypeptide is Beta-hexosaminidase (Aspergillus oryzae (Yellow koji mold)).